Here is a 601-residue protein sequence, read N- to C-terminus: DNA ligase (601 aa).

Asp-258 contacts ATP. The active-site N6-AMP-lysine intermediate is the Lys-260. 6 residues coordinate ATP: Arg-265, Arg-280, Glu-310, Phe-350, Arg-427, and Lys-433.

This sequence belongs to the ATP-dependent DNA ligase family. Interacts with the PCNA heterotrimer, probably via subunit PCNA3. A divalent metal cation is required as a cofactor.

It catalyses the reaction ATP + (deoxyribonucleotide)n-3'-hydroxyl + 5'-phospho-(deoxyribonucleotide)m = (deoxyribonucleotide)n+m + AMP + diphosphate.. With respect to regulation, ligase activity stimulated by PCNA heterotrimer. DNA ligase that seals nicks in double-stranded DNA during DNA replication, DNA recombination and DNA repair. Interaction with PCNA enhances ligase activity. DNA polymerase I, DNA ligase and the flap endonuclease may be constitutively associated with the PCNA heterotrimer forming a scanning complex able to couple DNA synthesis and Okazaki fragment maturation. In Saccharolobus solfataricus (strain ATCC 35092 / DSM 1617 / JCM 11322 / P2) (Sulfolobus solfataricus), this protein is DNA ligase.